The following is a 316-amino-acid chain: Probable cell division protein WhiA (316 aa).

A DNA-binding region (H-T-H motif) is located at residues 274–308 (SLKELGEMVSTGVISKSGVNHRLRKIDEIAEKLRN).

It belongs to the WhiA family.

In terms of biological role, involved in cell division and chromosome segregation. The chain is Probable cell division protein WhiA from Macrococcus caseolyticus (strain JCSC5402) (Macrococcoides caseolyticum).